The primary structure comprises 52 residues: Large ribosomal subunit protein bL32c (52 aa).

Belongs to the bacterial ribosomal protein bL32 family.

It is found in the plastid. The protein localises to the chloroplast. The chain is Large ribosomal subunit protein bL32c from Citrus sinensis (Sweet orange).